A 199-amino-acid polypeptide reads, in one-letter code: Recombination protein RecR (199 aa).

Residues 58-73 (CKVCTNLTDQEVCNIC) form a C4-type zinc finger. The region spanning 81 to 176 (LLICVVEDPR…KVSRIAHGIP (96 aa)) is the Toprim domain.

This sequence belongs to the RecR family.

In terms of biological role, may play a role in DNA repair. It seems to be involved in an RecBC-independent recombinational process of DNA repair. It may act with RecF and RecO. This chain is Recombination protein RecR, found in Alkaliphilus oremlandii (strain OhILAs) (Clostridium oremlandii (strain OhILAs)).